A 267-amino-acid chain; its full sequence is Glucosamine-6-phosphate deaminase (267 aa).

Asp72 acts as the Proton acceptor; for enolization step in catalysis. The For ring-opening step role is filled by Asp141. Residue His143 is the Proton acceptor; for ring-opening step of the active site. Residue Glu148 is the For ring-opening step of the active site.

The protein belongs to the glucosamine/galactosamine-6-phosphate isomerase family. NagB subfamily. In terms of assembly, homohexamer.

It carries out the reaction alpha-D-glucosamine 6-phosphate + H2O = beta-D-fructose 6-phosphate + NH4(+). Its pathway is amino-sugar metabolism; N-acetylneuraminate degradation; D-fructose 6-phosphate from N-acetylneuraminate: step 5/5. Allosterically activated by N-acetylglucosamine 6-phosphate (GlcNAc6P). Catalyzes the reversible isomerization-deamination of glucosamine 6-phosphate (GlcN6P) to form fructose 6-phosphate (Fru6P) and ammonium ion. This Pasteurella multocida (strain Pm70) protein is Glucosamine-6-phosphate deaminase.